Reading from the N-terminus, the 278-residue chain is Membrane protein insertase YidC 2 (278 aa).

Positions 1 to 18 (MHKRLFITLLGFIILLAG) are cleaved as a signal peptide. A lipid anchor (N-palmitoyl cysteine) is attached at cysteine 19. The S-diacylglycerol cysteine moiety is linked to residue cysteine 19. Transmembrane regions (helical) follow at residues 55–75 (GFAI…FMLI), 132–152 (MLGC…YMSL), 176–196 (LIMT…NSIH), and 224–244 (AAAL…QMHF).

Belongs to the OXA1/ALB3/YidC family. Type 2 subfamily.

Its subcellular location is the cell membrane. Its function is as follows. Required for the insertion and/or proper folding and/or complex formation of integral membrane proteins into the membrane. Involved in integration of membrane proteins that insert both dependently and independently of the Sec translocase complex, as well as at least some lipoproteins. In Staphylococcus epidermidis (strain ATCC 12228 / FDA PCI 1200), this protein is Membrane protein insertase YidC 2.